The following is a 602-amino-acid chain: Fructan 1-exohydrolase (602 aa).

The first 19 residues, 1-19 (MAQAWAFLLLPVLLLSSYA), serve as a signal peptide directing secretion. Residue Asp81 is part of the active site. N-linked (GlcNAc...) asparagine glycans are attached at residues Asn174, Asn242, and Asn254. Cys452 and Cys498 are oxidised to a cystine.

This sequence belongs to the glycosyl hydrolase 32 family. Detected in leaves, with maximum levels at the leaf tip.

The catalysed reaction is Hydrolysis of terminal, non-reducing (2-&gt;1)-linked beta-D-fructofuranose residues in fructans.. Its activity is regulated as follows. Inhibited by sucrose. Hydrolyzes inulin-type beta-(2,1)-fructans. Has low activity against beta-(2,6)-linked fructans. May play a role as a beta-(2,1)-trimmer during graminan biosynthesis. The chain is Fructan 1-exohydrolase from Bromus pictus (Patagonian grass).